The sequence spans 191 residues: NF-kappa-B inhibitor-interacting Ras-like protein 2 (191 aa).

The interval 1–191 (MGKSCKVVVC…KNKGSGSLDG (191 aa)) is small GTPase-like. Residue 11-18 (GQASVGKT) coordinates GTP. The short motif at 35–43 (MIETQEDIY) is the Effector region element. Residues 61–65 (DTRGL) and 120–123 (NKCD) contribute to the GTP site. The disordered stretch occupies residues 169–191 (TQPQSKSAFPLSRKNKGSGSLDG).

It belongs to the small GTPase superfamily. Ras family. KappaB-Ras subfamily. Interacts with both NF-kappa-B inhibitor alpha (NFKBIA) and beta (NFKBIB) in vitro. However, it probably only interacts with NFKBIB in vivo. Interacts with GFOD1. In terms of tissue distribution, widely expressed.

The protein localises to the cytoplasm. Its function is as follows. Atypical Ras-like protein that acts as a potent regulator of NF-kappa-B activity by preventing the degradation of NF-kappa-B inhibitor beta (NFKBIB) by most signals, explaining why NFKBIB is more resistant to degradation. May act by blocking phosphorylation of NFKBIB and nuclear localization of p65/RELA NF-kappa-B subunit. It is unclear whether it acts as a GTPase. Both GTP- and GDP-bound forms block phosphorylation of NFKBIB. The polypeptide is NF-kappa-B inhibitor-interacting Ras-like protein 2 (NKIRAS2) (Homo sapiens (Human)).